The chain runs to 147 residues: UPF0306 protein YhbP (147 aa).

This sequence belongs to the UPF0306 family.

The protein is UPF0306 protein YhbP of Escherichia coli O7:K1 (strain IAI39 / ExPEC).